Consider the following 706-residue polypeptide: Melanopsin (706 aa).

Over 1-86 the chain is Extracellular; sequence MTEIPSFQPP…VWDIPPLAHY (86 aa). 3 N-linked (GlcNAc...) asparagine glycosylation sites follow: Asn-12, Asn-64, and Asn-69. A helical transmembrane segment spans residues 87-107; it reads IVGTAVFCIGCCGMFGNAVVV. Residues 108-121 are Cytoplasmic-facing; sequence YSFIKSKGLRTPAN. Residues 122-142 traverse the membrane as a helical segment; the sequence is FFIINLALSDFLMNLTNMPIF. The Extracellular portion of the chain corresponds to 143 to 159; sequence AVNSAFQRWLLSDFACE. A disulfide bridge links Cys-158 with Cys-236. Residues 160–180 traverse the membrane as a helical segment; sequence LYGFAGGLFGCLSINTLMAIS. Residues 181–201 are Cytoplasmic-facing; it reads MDRYLVITKPFLVMRIVTKQR. The chain crosses the membrane as a helical span at residues 202–222; the sequence is VMFAILLLWIWSLVWALPPLF. The Extracellular portion of the chain corresponds to 223–248; the sequence is GWSAYVSEGFGTSCTFDYMTPKLSYH. A helical membrane pass occupies residues 249–269; sequence IFTYIIFFTMYFIPGGVMIYC. At 270-314 the chain is on the cytoplasmic side; that stretch reads YYNIFATVKSGDKQFGKAVKEMAHEDVKNKAQQERQRKNEIKTAK. Residues 315 to 335 traverse the membrane as a helical segment; that stretch reads IAFIVISLFMSAWTPYAVVSA. Residues 336–351 lie on the Extracellular side of the membrane; it reads LGTLGYQDLVTPYLQS. Residues 352-372 traverse the membrane as a helical segment; that stretch reads IPAMFAKSSAVYSPIVYAITY. N6-(retinylidene)lysine is present on Lys-358. Over 373 to 706 the chain is Cytoplasmic; the sequence is PKFREAVKKH…LSEAHDETVL (334 aa). 3 disordered regions span residues 393–446, 571–599, and 630–658; these read SEEE…RQDT, RTESGYDRSQDSQRKKVVGDTHRSRSFNT, and QSSEKHEYDNPAFDEGITEVDTDSENETE. Low complexity-rich tracts occupy residues 404–418 and 426–442; these read QSSASASMSMTQTTA and SVDSGSSVSVDDSSGVS. Positions 571 to 593 are enriched in basic and acidic residues; sequence RTESGYDRSQDSQRKKVVGDTHR. The span at 645–658 shows a compositional bias: acidic residues; that stretch reads GITEVDTDSENETE.

Belongs to the G-protein coupled receptor 1 family. Opsin subfamily. In terms of tissue distribution, expressed in Joseph cells and photoreceptor cells of the dorsal ocelli.

It localises to the cell membrane. Functionally, photoreceptor implicated in non-image-forming responses to light. Photoisomerizes covalently bound all-trans retinal back to 11-cis retinal. Most likely coupled to the G(q) signaling cascade. The polypeptide is Melanopsin (Branchiostoma belcheri (Amphioxus)).